The primary structure comprises 156 residues: ATP synthase subunit b (156 aa).

The chain crosses the membrane as a helical span at residues 7–29 (LIGQLIAFALFTWFCVKFVWPPI).

It belongs to the ATPase B chain family. As to quaternary structure, F-type ATPases have 2 components, F(1) - the catalytic core - and F(0) - the membrane proton channel. F(1) has five subunits: alpha(3), beta(3), gamma(1), delta(1), epsilon(1). F(0) has three main subunits: a(1), b(2) and c(10-14). The alpha and beta chains form an alternating ring which encloses part of the gamma chain. F(1) is attached to F(0) by a central stalk formed by the gamma and epsilon chains, while a peripheral stalk is formed by the delta and b chains.

Its subcellular location is the cell inner membrane. F(1)F(0) ATP synthase produces ATP from ADP in the presence of a proton or sodium gradient. F-type ATPases consist of two structural domains, F(1) containing the extramembraneous catalytic core and F(0) containing the membrane proton channel, linked together by a central stalk and a peripheral stalk. During catalysis, ATP synthesis in the catalytic domain of F(1) is coupled via a rotary mechanism of the central stalk subunits to proton translocation. Its function is as follows. Component of the F(0) channel, it forms part of the peripheral stalk, linking F(1) to F(0). The protein is ATP synthase subunit b of Mannheimia succiniciproducens (strain KCTC 0769BP / MBEL55E).